The sequence spans 307 residues: MRSRDMERGRKHRGDTQWTAWLTPTIVVANVSIFIVVMYTNDCPKTTTGANGDCVAKLLRRFSFQPLRENPFLGPSSSTLEKLGALDWKKVVQGNEKWRLITAMWLHAGIIHLVMNMFDVIIFGIRLEQQFGFIRIGLIYLISGFGGSILSALFLQKSISVGASGALLGLMGAMLSELLTNWTIYKSKLCALLSFLFIIAINLAIGLLPWVDNFAHIGGLLTGFCLGFILLMQPQSGWEEFRNSSQYGARARSKYNPCQYVLFFVAAVLVVAGLTVGLVMLFDGENGNKHCKWCHRLDCYPTSKWSC.

A mitochondrion-targeting transit peptide spans 1–62 (MRSRDMERGR…DCVAKLLRRF (62 aa)). Transmembrane regions (helical) follow at residues 105-125 (WLHA…IFGI), 136-156 (IGLI…LFLQ), 159-179 (ISVG…SELL), 191-211 (ALLS…LPWV), 214-234 (FAHI…LMQP), and 262-282 (LFFV…VMLF). Catalysis depends on serine 164, which acts as the Nucleophile. Histidine 216 acts as the Charge relay system in catalysis.

The protein belongs to the peptidase S54 family.

It localises to the mitochondrion membrane. The catalysed reaction is Cleaves type-1 transmembrane domains using a catalytic dyad composed of serine and histidine that are contributed by different transmembrane domains.. Its function is as follows. Probable rhomboid-type serine protease that catalyzes intramembrane proteolysis. Might be involved in response to abiotic stimuli. This chain is RHOMBOID-like protein 6, mitochondrial, found in Arabidopsis thaliana (Mouse-ear cress).